The sequence spans 87 residues: UPF0250 protein BCc_307 (87 aa).

The protein belongs to the UPF0250 family.

This is UPF0250 protein BCc_307 from Buchnera aphidicola subsp. Cinara cedri (strain Cc).